We begin with the raw amino-acid sequence, 184 residues long: uncharacterized protein (184 aa).

The Nudix hydrolase domain maps to 36 to 164 (LRHRATYIVV…TPDSLKALAL (129 aa)). The Nudix box signature appears at 73–95 (GGVVQADEQLLESARREAEEELG). Mg(2+)-binding residues include Glu-89 and Glu-93.

Belongs to the Nudix hydrolase family. It depends on Mg(2+) as a cofactor.

This is an uncharacterized protein from Salmonella typhi.